Here is a 272-residue protein sequence, read N- to C-terminus: HTH-type transcriptional repressor AllR (272 aa).

The segment at 1–20 (MTEVRRRGRPGQAEPTAQKG) is disordered. The 63-residue stretch at 21-83 (AQALERGIAI…SQLGWWHIGL (63 aa)) folds into the HTH iclR-type domain. Positions 43–62 (VSDISGSLDLPLSTTFRLLK) form a DNA-binding region, H-T-H motif. One can recognise an IclR-ED domain in the interval 98 to 267 (VLSVAGPFMH…AKDISTALGL (170 aa)). Residues 154 to 156 (SGA), D207, C217, and 234 to 236 (SIS) each bind glyoxylate.

Its function is as follows. Negative regulator of allantoin and glyoxylate utilization operons. Binds to the gcl promoter and to the allS-allA intergenic region. The protein is HTH-type transcriptional repressor AllR (allR) of Salmonella paratyphi A (strain ATCC 9150 / SARB42).